The following is a 200-amino-acid chain: General odorant-binding protein 70 (200 aa).

Positions 1–29 are cleaved as a signal peptide; the sequence is MRRQYSMWASTVAVIACGSALMLLHPVGA. 2 disulfide bridges follow: Cys105/Cys174 and Cys152/Cys183.

The protein belongs to the PBP/GOBP family.

Its subcellular location is the secreted. Functionally, present in the aqueous fluid surrounding olfactory sensory dendrites and are thought to aid in the capture and transport of hydrophobic odorants into and through this fluid. The protein is General odorant-binding protein 70 (Obp70) of Anopheles gambiae (African malaria mosquito).